A 148-amino-acid chain; its full sequence is SsrA-binding protein (148 aa).

The protein belongs to the SmpB family.

The protein resides in the cytoplasm. Required for rescue of stalled ribosomes mediated by trans-translation. Binds to transfer-messenger RNA (tmRNA), required for stable association of tmRNA with ribosomes. tmRNA and SmpB together mimic tRNA shape, replacing the anticodon stem-loop with SmpB. tmRNA is encoded by the ssrA gene; the 2 termini fold to resemble tRNA(Ala) and it encodes a 'tag peptide', a short internal open reading frame. During trans-translation Ala-aminoacylated tmRNA acts like a tRNA, entering the A-site of stalled ribosomes, displacing the stalled mRNA. The ribosome then switches to translate the ORF on the tmRNA; the nascent peptide is terminated with the 'tag peptide' encoded by the tmRNA and targeted for degradation. The ribosome is freed to recommence translation, which seems to be the essential function of trans-translation. This Ehrlichia ruminantium (strain Welgevonden) protein is SsrA-binding protein.